The following is a 915-amino-acid chain: Protein translocase subunit SecA (915 aa).

Residues Gln87, Gly105–Thr109, and Asp512 contribute to the ATP site. Residues Ala849–Ala864 show a composition bias toward low complexity. The interval Ala849 to Ala915 is disordered. A compositionally biased stretch (basic and acidic residues) spans Pro876–Arg891. Zn(2+) is bound by residues Cys895, Cys897, Cys906, and His907.

Belongs to the SecA family. As to quaternary structure, monomer and homodimer. Part of the essential Sec protein translocation apparatus which comprises SecA, SecYEG and auxiliary proteins SecDF-YajC and YidC. Zn(2+) serves as cofactor.

The protein localises to the cell inner membrane. It localises to the cytoplasm. It catalyses the reaction ATP + H2O + cellular proteinSide 1 = ADP + phosphate + cellular proteinSide 2.. Functionally, part of the Sec protein translocase complex. Interacts with the SecYEG preprotein conducting channel. Has a central role in coupling the hydrolysis of ATP to the transfer of proteins into and across the cell membrane, serving both as a receptor for the preprotein-SecB complex and as an ATP-driven molecular motor driving the stepwise translocation of polypeptide chains across the membrane. In Actinobacillus succinogenes (strain ATCC 55618 / DSM 22257 / CCUG 43843 / 130Z), this protein is Protein translocase subunit SecA.